The primary structure comprises 291 residues: Orotidine 5'-phosphate decarboxylase (291 aa).

The active-site Proton donor is the K97.

This sequence belongs to the OMP decarboxylase family. Type 2 subfamily.

It catalyses the reaction orotidine 5'-phosphate + H(+) = UMP + CO2. It participates in pyrimidine metabolism; UMP biosynthesis via de novo pathway; UMP from orotate: step 2/2. This chain is Orotidine 5'-phosphate decarboxylase, found in Clostridium kluyveri (strain ATCC 8527 / DSM 555 / NBRC 12016 / NCIMB 10680 / K1).